Reading from the N-terminus, the 339-residue chain is Phenylalanine--tRNA ligase alpha subunit (339 aa).

Position 250 (E250) interacts with Mg(2+).

The protein belongs to the class-II aminoacyl-tRNA synthetase family. Phe-tRNA synthetase alpha subunit type 1 subfamily. In terms of assembly, tetramer of two alpha and two beta subunits. Mg(2+) is required as a cofactor.

The protein localises to the cytoplasm. It catalyses the reaction tRNA(Phe) + L-phenylalanine + ATP = L-phenylalanyl-tRNA(Phe) + AMP + diphosphate + H(+). In Bacteroides fragilis (strain ATCC 25285 / DSM 2151 / CCUG 4856 / JCM 11019 / LMG 10263 / NCTC 9343 / Onslow / VPI 2553 / EN-2), this protein is Phenylalanine--tRNA ligase alpha subunit.